A 199-amino-acid polypeptide reads, in one-letter code: NAD(P)H dehydrogenase (quinone) (199 aa).

A Flavodoxin-like domain is found at Val4–Ile190. Residues Ser10–Ile15 and Thr78–Phe80 each bind FMN. Tyr12 contributes to the NAD(+) binding site. Substrate is bound at residue Trp98. FMN is bound by residues Ser113–Gly119 and His134.

Belongs to the WrbA family. FMN is required as a cofactor.

The enzyme catalyses a quinone + NADH + H(+) = a quinol + NAD(+). It catalyses the reaction a quinone + NADPH + H(+) = a quinol + NADP(+). The protein is NAD(P)H dehydrogenase (quinone) of Nitrobacter winogradskyi (strain ATCC 25391 / DSM 10237 / CIP 104748 / NCIMB 11846 / Nb-255).